Reading from the N-terminus, the 342-residue chain is Oxygen-dependent coproporphyrinogen-III oxidase (342 aa).

Ser-98 is a binding site for substrate. His-102 and His-112 together coordinate a divalent metal cation. His-112 acts as the Proton donor in catalysis. Substrate is bound at residue 114–116; the sequence is NYR. His-146 and His-176 together coordinate a divalent metal cation. An important for dimerization region spans residues 266–301; it reads YVEFNLVWDRGTIFGLQTNGRTESILMSLPPLARWE.

Belongs to the aerobic coproporphyrinogen-III oxidase family. Homodimer. A divalent metal cation is required as a cofactor.

The protein localises to the cytoplasm. It carries out the reaction coproporphyrinogen III + O2 + 2 H(+) = protoporphyrinogen IX + 2 CO2 + 2 H2O. It functions in the pathway porphyrin-containing compound metabolism; protoporphyrin-IX biosynthesis; protoporphyrinogen-IX from coproporphyrinogen-III (O2 route): step 1/1. Involved in the heme and chlorophyll biosynthesis. Catalyzes the aerobic oxidative decarboxylation of propionate groups of rings A and B of coproporphyrinogen-III to yield the vinyl groups in protoporphyrinogen-IX. This is Oxygen-dependent coproporphyrinogen-III oxidase from Prochlorococcus marinus (strain AS9601).